The chain runs to 550 residues: Leiomodin-2 (550 aa).

The tract at residues 1–47 (MSTFGYRRGLSKYESIDEDELLASLSPEELKELERELEDIEPDRNLP) is interaction with tropomyosin alpha. 3 interaction with actin regions span residues 1–165 (MSTF…TDNS), 166–500 (KPKT…KEIK), and 524–543 (VHENLMEAIRGSSIRQLRRV). 3 positions are modified to phosphoserine: Ser-11, Ser-15, and Ser-24. Residues 84–94 (ERLGECGKVAE) are compositionally biased toward basic and acidic residues. Disordered regions lie at residues 84 to 202 (ERLG…PCGN) and 359 to 527 (MDKQ…VHEN). Residues 91 to 147 (KVAEEDKEESEEELIFTESNSEVSEEVCTEDEEESQEEEEDSEEEEDSEEEEETTEA) adopt a coiled-coil conformation. Acidic residues-rich tracts occupy residues 95-105 (EDKEESEEELI) and 113-145 (VSEEVCTEDEEESQEEEEDSEEEEDSEEEEETT). Composition is skewed to polar residues over residues 151–164 (INGTVSYNSVNTDN) and 170–193 (FKSQIENINLTNGNSGRTQRNSES). The span at 359–377 (MDKQRQKRMQEQKQQEGHD) shows a compositional bias: basic and acidic residues. Residues 391 to 402 (TPGSSPYASPRQ) show a composition bias toward polar residues. Ser-407 is modified (phosphoserine). Pro residues predominate over residues 421–452 (PPSPVAPPPPPPPPPLPPHMLPPPPPPPAPPL). Positions 468 to 479 (QQESAQRALQNG) are enriched in polar residues. The segment covering 480-490 (QRKKKGKKVKK) has biased composition (basic residues). Positions 497-515 (KEIKNSLRSVQEKKMEDSS) are enriched in basic and acidic residues. Residues 524-543 (VHENLMEAIRGSSIRQLRRV) enclose the WH2 domain.

Belongs to the tropomodulin family. As to quaternary structure, can bind at least three actin monomers and thereby provides a nucleus for actin filament formation. Interacts (via N-terminus) with tropomyosin alpha (TPM1) (via N-terminus). May also interact with TPM2 (via N-terminus). Interacts with FLII. As to expression, detected in neonate heart (at protein level). Detected in embryonic heart and in pharyngeal arches. Detected in adult heart.

Its subcellular location is the cytoplasm. The protein localises to the myofibril. The protein resides in the sarcomere. It is found in the m line. It localises to the cytoskeleton. Functionally, mediates nucleation of actin filaments and thereby promotes actin polymerization. Plays a role in the regulation of actin filament length. Required for normal sarcomere organization in the heart, and for normal heart function. The polypeptide is Leiomodin-2 (Lmod2) (Mus musculus (Mouse)).